Here is a 294-residue protein sequence, read N- to C-terminus: Acetyl-coenzyme A carboxylase carboxyl transferase subunit beta (294 aa).

Positions 30 to 294 (IMTKCPECKK…PEAGGESDGE (265 aa)) constitute a CoA carboxyltransferase N-terminal domain. Residues cysteine 34, cysteine 37, cysteine 53, and cysteine 56 each coordinate Zn(2+). The C4-type zinc finger occupies 34–56 (CPECKKIMYTKELQKNLMVCNYC).

It belongs to the AccD/PCCB family. In terms of assembly, acetyl-CoA carboxylase is a heterohexamer composed of biotin carboxyl carrier protein (AccB), biotin carboxylase (AccC) and two subunits each of ACCase subunit alpha (AccA) and ACCase subunit beta (AccD). It depends on Zn(2+) as a cofactor.

It is found in the cytoplasm. It catalyses the reaction N(6)-carboxybiotinyl-L-lysyl-[protein] + acetyl-CoA = N(6)-biotinyl-L-lysyl-[protein] + malonyl-CoA. Its pathway is lipid metabolism; malonyl-CoA biosynthesis; malonyl-CoA from acetyl-CoA: step 1/1. In terms of biological role, component of the acetyl coenzyme A carboxylase (ACC) complex. Biotin carboxylase (BC) catalyzes the carboxylation of biotin on its carrier protein (BCCP) and then the CO(2) group is transferred by the transcarboxylase to acetyl-CoA to form malonyl-CoA. This chain is Acetyl-coenzyme A carboxylase carboxyl transferase subunit beta, found in Listeria innocua serovar 6a (strain ATCC BAA-680 / CLIP 11262).